Reading from the N-terminus, the 425-residue chain is UDP-N-acetylglucosamine 1-carboxyvinyltransferase (425 aa).

Residue 22 to 23 (KN) coordinates phosphoenolpyruvate. UDP-N-acetyl-alpha-D-glucosamine is bound at residue R93. The active-site Proton donor is D117. Residues D312 and M334 each contribute to the UDP-N-acetyl-alpha-D-glucosamine site.

It belongs to the EPSP synthase family. MurA subfamily.

It is found in the cytoplasm. The enzyme catalyses phosphoenolpyruvate + UDP-N-acetyl-alpha-D-glucosamine = UDP-N-acetyl-3-O-(1-carboxyvinyl)-alpha-D-glucosamine + phosphate. It functions in the pathway cell wall biogenesis; peptidoglycan biosynthesis. Its function is as follows. Cell wall formation. Adds enolpyruvyl to UDP-N-acetylglucosamine. This is UDP-N-acetylglucosamine 1-carboxyvinyltransferase from Treponema pallidum (strain Nichols).